Reading from the N-terminus, the 576-residue chain is Aspartate--tRNA ligase (576 aa).

Residue E171 participates in L-aspartate binding. An aspartate region spans residues 195 to 198 (QLFK). R217 provides a ligand contact to L-aspartate. ATP contacts are provided by residues 217 to 219 (RDE) and Q226. Residue H450 participates in L-aspartate binding. ATP is bound at residue E484. L-aspartate is bound at residue R491. 536-539 (GLDR) serves as a coordination point for ATP.

It belongs to the class-II aminoacyl-tRNA synthetase family. Type 1 subfamily. As to quaternary structure, homodimer.

It localises to the cytoplasm. The catalysed reaction is tRNA(Asp) + L-aspartate + ATP = L-aspartyl-tRNA(Asp) + AMP + diphosphate. Its function is as follows. Catalyzes the attachment of L-aspartate to tRNA(Asp) in a two-step reaction: L-aspartate is first activated by ATP to form Asp-AMP and then transferred to the acceptor end of tRNA(Asp). The sequence is that of Aspartate--tRNA ligase from Buchnera aphidicola subsp. Baizongia pistaciae (strain Bp).